The sequence spans 432 residues: Adenylosuccinate synthetase (432 aa).

GTP contacts are provided by residues 13-19 (GDEGKGK) and 41-43 (GHT). The active-site Proton acceptor is D14. D14 and G41 together coordinate Mg(2+). IMP is bound by residues 14–17 (DEGK), 39–42 (NAGH), T130, R144, Q225, T240, and R304. H42 (proton donor) is an active-site residue. Residue 300–306 (ATTGRRR) participates in substrate binding. Residues R306, 332–334 (KLD), and 415–417 (STG) each bind GTP.

It belongs to the adenylosuccinate synthetase family. In terms of assembly, homodimer. Requires Mg(2+) as cofactor.

The protein resides in the cytoplasm. The catalysed reaction is IMP + L-aspartate + GTP = N(6)-(1,2-dicarboxyethyl)-AMP + GDP + phosphate + 2 H(+). It functions in the pathway purine metabolism; AMP biosynthesis via de novo pathway; AMP from IMP: step 1/2. Plays an important role in the de novo pathway of purine nucleotide biosynthesis. Catalyzes the first committed step in the biosynthesis of AMP from IMP. In Enterobacter sp. (strain 638), this protein is Adenylosuccinate synthetase.